We begin with the raw amino-acid sequence, 145 residues long: MYPAHLLLLLAVCVSLLGASAIPPLPLNLAQFALVIKCADKGKRPRWHYMDYGCYCGPGGSGTPVDELDRCCKTHDQCYAQAEKKGCYPKLTMYSYYCGGDGPYCNSKTECQRFVCDCDVRAADCFARYPYNNKNYNINTSKRCK.

An N-terminal signal peptide occupies residues 1–21 (MYPAHLLLLLAVCVSLLGASA). The propeptide occupies 22–27 (IPPLPL). Disulfide bonds link Cys38-Cys98, Cys54-Cys144, Cys56-Cys72, Cys71-Cys125, Cys78-Cys118, Cys87-Cys111, and Cys105-Cys116. Residues Tyr55, Gly57, and Gly59 each contribute to the Ca(2+) site. Residue His75 is part of the active site. Asp76 provides a ligand contact to Ca(2+). Asp119 is a catalytic residue.

The protein belongs to the phospholipase A2 family. Group I subfamily. D49 sub-subfamily. Requires Ca(2+) as cofactor. As to expression, expressed by the venom gland.

Its subcellular location is the secreted. The enzyme catalyses a 1,2-diacyl-sn-glycero-3-phosphocholine + H2O = a 1-acyl-sn-glycero-3-phosphocholine + a fatty acid + H(+). Its function is as follows. PLA2 catalyzes the calcium-dependent hydrolysis of the 2-acyl groups in 3-sn-phosphoglycerides. The chain is Basic phospholipase A2 P'513 from Laticauda laticaudata (Blue-ringed sea krait).